Here is a 205-residue protein sequence, read N- to C-terminus: Ras-related protein rab-6.1 (205 aa).

GTP contacts are provided by residues 18–25 (GEQSVGKT), Thr43, 66–70 (DTAGQ), and 124–127 (NKTD). 2 S-geranylgeranyl cysteine lipidation sites follow: Cys203 and Cys205. The residue at position 205 (Cys205) is a Cysteine methyl ester.

The protein belongs to the small GTPase superfamily. Rab family. In terms of assembly, interacts with GARP complex component vps-52. As to expression, highly expressed in body wall muscle, intestine, somatic gonad, distal tip cells, vulva, and neurons including AVB, AVD, RIG, and PVC (at protein level). Not expressed in AVA and RMDV neurons.

Its subcellular location is the cell membrane. The protein localises to the cell projection. It is found in the dendrite. It localises to the perikaryon. The protein resides in the golgi apparatus. Its subcellular location is the cytoplasmic vesicle. The protein localises to the secretory vesicle. The small GTPases Rab are key regulators of intracellular membrane trafficking, from the formation of transport vesicles to their fusion with membranes. Rabs cycle between an inactive GDP-bound form and an active GTP-bound form that is able to recruit to membranes different set of downstream effectors directly responsible for vesicle formation, movement, tethering and fusion. In its active GTP-bound form, acts redundantly with rab-6.2 (in its active GTP-bound form) to positively regulate the retrograde trafficking of cargo molecules from endosomes to Golgi structures. Required for the retrograde trafficking of glr-1, a subunit of AMPA-type glutamate receptors (AMPRs), out of early endosomes and into the Golgi compartment in neurons. Together with rab-6.2, promotes the retrograde trafficking of mig-14 from endosomes to Golgi structures in the intestine. In oocytes, in its active GTP-bound form, involved in the membrane fusion and exocytosis of secretory vesicles (cortical granules) to play a role in the remodeling of the embryo surface following fertilization. Recruits sep-1 to cortical granules (derived from the Golgi complex) for exocytosis during the oocyte-to-embryo transition. Required for seam cell division and alae formation. Promotes spontaneous reversals in locomotion. This Caenorhabditis elegans protein is Ras-related protein rab-6.1.